The sequence spans 41 residues: Plantazolicin (41 aa).

Positions 1-27 (MTQIKVPTALIASVHGEGQHLFEPMAA) are excised as a propeptide. Position 28 is an N2,N2-dimethylarginine (Arg28). The thiazole-4-carboxylic acid (Arg-Cys) cross-link spans 28 to 29 (RC). Cross-links (5-methyloxazole-4-carboxylic acid (Cys-Thr)) lie at residues 29–30 (CT) and 31–32 (CT). The segment at residues 30–31 (TC) is a cross-link (thiazole-4-carboxylic acid (Thr-Cys)). Positions 32–33 (TT) form a cross-link, 5-methyloxazole-4-carboxylic acid (Thr-Thr). Residues 35-36 (IS) constitute a cross-link (oxazole-4-carboxylic acid (Ile-Ser)). 3 cross-links (oxazole-4-carboxylic acid (Ser-Ser)) span residues 36–37 (SS), 37–38 (SS), and 38–39 (SS). A cross-link (5-methyloxazoline-4-carboxylic acid (Ser-Thr)) is located at residues 39–40 (ST).

Post-translationally, maturation of thiazole and oxazole containing antibiotics involves the enzymatic condensation of a Cys, Ser or Thr with the alpha-carbonyl of the preceding amino acid to form a thioether or ether bond, then dehydration to form a double bond with the alpha-amino nitrogen. Thiazoline or oxazoline ring are dehydrogenated to form thiazole or oxazole rings. 2 forms exist: plantazolicin A and plantazolicin B. The structural difference between them is a dimethylation at Arg-28 in plantazolicin A.

Its subcellular location is the secreted. The protein resides in the cell wall. Its function is as follows. Peptide antibiotic inhibiting growth of Gram-positive bacteria in the dimethylated form plantazolicin A. The desmethyl form plantazolicin B has no antibiotic activity. The mode of action appears to be disruption of cell walls and lysis of cells. Inhibits B.subtilis strain HB0042, B.megaterium strain 7A1 and B.anthracis (MIC=2-4 ug/ml). Weakly inhibits Gram-positive bacteria B.brevis strain ATCC 8246, B.subtilis strain 168, B.cereus strain ATCC 14579 and strain CU1065, B.licheniformis strain ATCC 9789, M.luteus, B.sphaericus, P.granivorans and S.pyogenes (MIC=128 ug/ml). Does not inhibit B.pumilus, P.polymyxa, Arthrobacter sp., S.aureus, vancomycin-resistant E.faecalis, L.monocytogenes, methicillin-resistant S.aureus or Gram-negative bacteria E.coli strain K12, K.terrigena, Pseudomonas sp. and E.carotovora. This is Plantazolicin from Bacillus velezensis (strain DSM 23117 / BGSC 10A6 / LMG 26770 / FZB42) (Bacillus amyloliquefaciens subsp. plantarum).